We begin with the raw amino-acid sequence, 248 residues long: 1-(5-phosphoribosyl)-5-[(5-phosphoribosylamino)methylideneamino] imidazole-4-carboxamide isomerase (248 aa).

D8 functions as the Proton acceptor in the catalytic mechanism. D129 functions as the Proton donor in the catalytic mechanism.

Belongs to the HisA/HisF family.

It is found in the cytoplasm. The catalysed reaction is 1-(5-phospho-beta-D-ribosyl)-5-[(5-phospho-beta-D-ribosylamino)methylideneamino]imidazole-4-carboxamide = 5-[(5-phospho-1-deoxy-D-ribulos-1-ylimino)methylamino]-1-(5-phospho-beta-D-ribosyl)imidazole-4-carboxamide. It functions in the pathway amino-acid biosynthesis; L-histidine biosynthesis; L-histidine from 5-phospho-alpha-D-ribose 1-diphosphate: step 4/9. The protein is 1-(5-phosphoribosyl)-5-[(5-phosphoribosylamino)methylideneamino] imidazole-4-carboxamide isomerase of Rhizobium etli (strain CIAT 652).